The chain runs to 217 residues: Thiamine-phosphate synthase (217 aa).

4-amino-2-methyl-5-(diphosphooxymethyl)pyrimidine-binding positions include 42-46 (QYRDK) and Asp-77. Residues Asp-78 and Asp-97 each contribute to the Mg(2+) site. Residue Ser-116 participates in 4-amino-2-methyl-5-(diphosphooxymethyl)pyrimidine binding. 143-145 (TTS) lines the 2-[(2R,5Z)-2-carboxy-4-methylthiazol-5(2H)-ylidene]ethyl phosphate pocket. Lys-146 serves as a coordination point for 4-amino-2-methyl-5-(diphosphooxymethyl)pyrimidine. Residues Gly-174 and 194–195 (IS) each bind 2-[(2R,5Z)-2-carboxy-4-methylthiazol-5(2H)-ylidene]ethyl phosphate.

It belongs to the thiamine-phosphate synthase family. Mg(2+) is required as a cofactor.

The enzyme catalyses 2-[(2R,5Z)-2-carboxy-4-methylthiazol-5(2H)-ylidene]ethyl phosphate + 4-amino-2-methyl-5-(diphosphooxymethyl)pyrimidine + 2 H(+) = thiamine phosphate + CO2 + diphosphate. It catalyses the reaction 2-(2-carboxy-4-methylthiazol-5-yl)ethyl phosphate + 4-amino-2-methyl-5-(diphosphooxymethyl)pyrimidine + 2 H(+) = thiamine phosphate + CO2 + diphosphate. The catalysed reaction is 4-methyl-5-(2-phosphooxyethyl)-thiazole + 4-amino-2-methyl-5-(diphosphooxymethyl)pyrimidine + H(+) = thiamine phosphate + diphosphate. Its pathway is cofactor biosynthesis; thiamine diphosphate biosynthesis; thiamine phosphate from 4-amino-2-methyl-5-diphosphomethylpyrimidine and 4-methyl-5-(2-phosphoethyl)-thiazole: step 1/1. In terms of biological role, condenses 4-methyl-5-(beta-hydroxyethyl)thiazole monophosphate (THZ-P) and 2-methyl-4-amino-5-hydroxymethyl pyrimidine pyrophosphate (HMP-PP) to form thiamine monophosphate (TMP). This is Thiamine-phosphate synthase from Lactiplantibacillus plantarum (strain ATCC BAA-793 / NCIMB 8826 / WCFS1) (Lactobacillus plantarum).